Here is a 250-residue protein sequence, read N- to C-terminus: 2,3-bisphosphoglycerate-dependent phosphoglycerate mutase (250 aa).

Substrate is bound by residues 8–15 (RHGESTWN), 21–22 (TG), arginine 60, 87–90 (ERHY), lysine 98, and 114–115 (RR). Histidine 9 (tele-phosphohistidine intermediate) is an active-site residue. Catalysis depends on glutamate 87, which acts as the Proton donor/acceptor. Positions 116 to 135 (SYDTPPPPLAANDPRSERSD) are disordered. Position 183-184 (183-184 (GN)) interacts with substrate.

Belongs to the phosphoglycerate mutase family. BPG-dependent PGAM subfamily. Homodimer.

It carries out the reaction (2R)-2-phosphoglycerate = (2R)-3-phosphoglycerate. It functions in the pathway carbohydrate degradation; glycolysis; pyruvate from D-glyceraldehyde 3-phosphate: step 3/5. Its function is as follows. Catalyzes the interconversion of 2-phosphoglycerate and 3-phosphoglycerate. This Polaromonas naphthalenivorans (strain CJ2) protein is 2,3-bisphosphoglycerate-dependent phosphoglycerate mutase.